We begin with the raw amino-acid sequence, 434 residues long: CinA-like protein (434 aa).

Belongs to the CinA family.

In Mycolicibacterium paratuberculosis (strain ATCC BAA-968 / K-10) (Mycobacterium paratuberculosis), this protein is CinA-like protein.